Here is a 243-residue protein sequence, read N- to C-terminus: Small ribosomal subunit protein uS2 (243 aa).

Belongs to the universal ribosomal protein uS2 family.

This Chromobacterium violaceum (strain ATCC 12472 / DSM 30191 / JCM 1249 / CCUG 213 / NBRC 12614 / NCIMB 9131 / NCTC 9757 / MK) protein is Small ribosomal subunit protein uS2.